Here is a 459-residue protein sequence, read N- to C-terminus: Pup--protein ligase (459 aa).

E9 is a binding site for Mg(2+). R54 is a binding site for ATP. Y56 contacts Mg(2+). The active-site Proton acceptor is D58. Residue E64 participates in Mg(2+) binding. T67 and W421 together coordinate ATP.

Belongs to the Pup ligase/Pup deamidase family. Pup-conjugating enzyme subfamily.

The enzyme catalyses ATP + [prokaryotic ubiquitin-like protein]-L-glutamate + [protein]-L-lysine = ADP + phosphate + N(6)-([prokaryotic ubiquitin-like protein]-gamma-L-glutamyl)-[protein]-L-lysine.. It participates in protein degradation; proteasomal Pup-dependent pathway. The protein operates within protein modification; protein pupylation. Its function is as follows. Catalyzes the covalent attachment of the prokaryotic ubiquitin-like protein modifier Pup to the proteasomal substrate proteins, thereby targeting them for proteasomal degradation. This tagging system is termed pupylation. The ligation reaction involves the side-chain carboxylate of the C-terminal glutamate of Pup and the side-chain amino group of a substrate lysine. The protein is Pup--protein ligase of Jonesia denitrificans (strain ATCC 14870 / DSM 20603 / BCRC 15368 / CIP 55.134 / JCM 11481 / NBRC 15587 / NCTC 10816 / Prevot 55134) (Listeria denitrificans).